The primary structure comprises 102 residues: Large ribosomal subunit protein bL21 (102 aa).

This sequence belongs to the bacterial ribosomal protein bL21 family. Part of the 50S ribosomal subunit. Contacts protein L20.

Its function is as follows. This protein binds to 23S rRNA in the presence of protein L20. This is Large ribosomal subunit protein bL21 from Sulfurimonas denitrificans (strain ATCC 33889 / DSM 1251) (Thiomicrospira denitrificans (strain ATCC 33889 / DSM 1251)).